Consider the following 174-residue polypeptide: uncharacterized protein (174 aa).

It belongs to the NAD(P)H dehydrogenase (quinone) family.

This is an uncharacterized protein from Bacillus subtilis (strain 168).